The following is a 358-amino-acid chain: MLDERMIRIVVAFIVSLLTVLIITPIVKRIAIKIGAVDQPSNRKVHDKIMPRMGGLAIFIGVVAGVLASGIYTETRMTAITVGAFIIIVLGILDDKYQLSAKVKFLIQLGVAIMIVSTGLKMDFFSVPFLTERFELGWMAYPLTVLWIVGITNAINLIDGLDGLAAGLSVIGLSTIAVMALSGGKVLILSLSLVVIASTLGFLFYNFHPAKIFMGDTGSLFLGYSISILSLLGLYKSVTLFSIVIPIIILGVPIFDTTFAIIRRILNKQPISAPDKSHIHHRLMAFGLSHRMSVLVIYLIGFIFSISAIVLKSATIWLSLFIIFILIIFMQIIAEVTGLVNEKFKPFTKFYKRLVKRN.

Helical transmembrane passes span 10–32 (VVAF…RIAI), 53–72 (MGGL…SGIY), 76–93 (RMTA…LGIL), 105–127 (FLIQ…FFSV), 137–157 (GWMA…AINL), 164–181 (LAAG…VMAL), 186–205 (VLIL…FLFY), 218–235 (GSLF…LGLY), 240–262 (LFSI…FAII), 292–311 (MSVL…AIVL), and 316–338 (IWLS…EVTG).

It belongs to the glycosyltransferase 4 family. Requires Mg(2+) as cofactor. Mn(2+) serves as cofactor.

It localises to the cell membrane. The catalysed reaction is di-trans,octa-cis-undecaprenyl phosphate + UDP-N-acetyl-alpha-D-glucosamine = N-acetyl-alpha-D-glucosaminyl-di-trans,octa-cis-undecaprenyl diphosphate + UMP. It participates in cell wall biogenesis; poly(glucopyranosyl N-acetylgalactosamine 1-phosphate) teichoic acid biosynthesis. It functions in the pathway cell wall biogenesis; poly(glycerol phosphate) teichoic acid biosynthesis. Catalyzes the formation of undecaprenyl-PP-N-acetylglucosamine. Involved in the synthesis of anionic cell-wall polymers as it mediates the initiation of the linkage unit formation that appears to be common to the two types of teichoic acids attached to the peptidoglycan of B.subtilis; may also be involved in teichuronic acid biosynthesis. In Bacillus subtilis (strain 168), this protein is Probable undecaprenyl-phosphate N-acetylglucosaminyl 1-phosphate transferase (tagO).